Reading from the N-terminus, the 288-residue chain is Bifunctional protein FolD (288 aa).

Residues G166 to S168, S191, and I232 each bind NADP(+).

This sequence belongs to the tetrahydrofolate dehydrogenase/cyclohydrolase family. Homodimer.

It catalyses the reaction (6R)-5,10-methylene-5,6,7,8-tetrahydrofolate + NADP(+) = (6R)-5,10-methenyltetrahydrofolate + NADPH. The enzyme catalyses (6R)-5,10-methenyltetrahydrofolate + H2O = (6R)-10-formyltetrahydrofolate + H(+). Its pathway is one-carbon metabolism; tetrahydrofolate interconversion. Its function is as follows. Catalyzes the oxidation of 5,10-methylenetetrahydrofolate to 5,10-methenyltetrahydrofolate and then the hydrolysis of 5,10-methenyltetrahydrofolate to 10-formyltetrahydrofolate. This is Bifunctional protein FolD from Rickettsia africae (strain ESF-5).